A 230-amino-acid chain; its full sequence is uncharacterized protein (230 aa).

The next 7 membrane-spanning stretches (helical) occupy residues 34–54 (FFAGSLLLATVGALLGLMNFQ), 56–76 (VVQYKWVFFIAEIVAFFGLMF), 87–107 (MLFAFTSLSGVTLVPLLGMVI), 111–131 (GLGAVWQALGMTTIVFGLMSV), 146–166 (MLFIALIVVVVCSLINLFLGS), 167–187 (PMFQVVIAGASAILFSLYIAY), and 205–225 (VSLYLDFLNVFISILQIIGIF).

The protein belongs to the BI1 family.

Its subcellular location is the cell membrane. This is an uncharacterized protein from Helicobacter pylori (strain J99 / ATCC 700824) (Campylobacter pylori J99).